We begin with the raw amino-acid sequence, 233 residues long: Glucosamine-6-phosphate deaminase (233 aa).

The active-site Proton acceptor; for enolization step is the Asp-62. Asn-128 serves as the catalytic For ring-opening step. His-130 functions as the Proton acceptor; for ring-opening step in the catalytic mechanism. The For ring-opening step role is filled by Glu-135.

The protein belongs to the glucosamine/galactosamine-6-phosphate isomerase family. NagB subfamily.

It catalyses the reaction alpha-D-glucosamine 6-phosphate + H2O = beta-D-fructose 6-phosphate + NH4(+). It functions in the pathway amino-sugar metabolism; N-acetylneuraminate degradation; D-fructose 6-phosphate from N-acetylneuraminate: step 5/5. Catalyzes the reversible isomerization-deamination of glucosamine 6-phosphate (GlcN6P) to form fructose 6-phosphate (Fru6P) and ammonium ion. In Enterococcus faecalis (strain ATCC 700802 / V583), this protein is Glucosamine-6-phosphate deaminase.